A 252-amino-acid chain; its full sequence is Imidazole glycerol phosphate synthase subunit HisF (252 aa).

Catalysis depends on residues Asp11 and Asp130.

This sequence belongs to the HisA/HisF family. In terms of assembly, heterodimer of HisH and HisF.

The protein resides in the cytoplasm. It carries out the reaction 5-[(5-phospho-1-deoxy-D-ribulos-1-ylimino)methylamino]-1-(5-phospho-beta-D-ribosyl)imidazole-4-carboxamide + L-glutamine = D-erythro-1-(imidazol-4-yl)glycerol 3-phosphate + 5-amino-1-(5-phospho-beta-D-ribosyl)imidazole-4-carboxamide + L-glutamate + H(+). Its pathway is amino-acid biosynthesis; L-histidine biosynthesis; L-histidine from 5-phospho-alpha-D-ribose 1-diphosphate: step 5/9. In terms of biological role, IGPS catalyzes the conversion of PRFAR and glutamine to IGP, AICAR and glutamate. The HisF subunit catalyzes the cyclization activity that produces IGP and AICAR from PRFAR using the ammonia provided by the HisH subunit. The sequence is that of Imidazole glycerol phosphate synthase subunit HisF from Thermococcus gammatolerans (strain DSM 15229 / JCM 11827 / EJ3).